Reading from the N-terminus, the 642-residue chain is 4-hydroxy-3-methylbut-2-enyl diphosphate reductase (642 aa).

The interval 1–282 is 4-hydroxy-3-methylbut-2-enyl diphosphate reductase; it reads MRKVMLAEKA…EEAISKMSEN (282 aa). Cysteine 13 serves as a coordination point for [4Fe-4S] cluster. Histidine 42 and histidine 77 together coordinate (2E)-4-hydroxy-3-methylbut-2-enyl diphosphate. Dimethylallyl diphosphate-binding residues include histidine 42 and histidine 77. Histidine 42 and histidine 77 together coordinate isopentenyl diphosphate. Residue cysteine 99 participates in [4Fe-4S] cluster binding. (2E)-4-hydroxy-3-methylbut-2-enyl diphosphate is bound at residue histidine 127. Position 127 (histidine 127) interacts with dimethylallyl diphosphate. Histidine 127 is a binding site for isopentenyl diphosphate. Glutamate 129 (proton donor) is an active-site residue. Threonine 165 contacts (2E)-4-hydroxy-3-methylbut-2-enyl diphosphate. Residue cysteine 193 coordinates [4Fe-4S] cluster. Residues serine 221, serine 222, asparagine 223, and serine 266 each contribute to the (2E)-4-hydroxy-3-methylbut-2-enyl diphosphate site. 4 residues coordinate dimethylallyl diphosphate: serine 221, serine 222, asparagine 223, and serine 266. Residues serine 221, serine 222, asparagine 223, and serine 266 each contribute to the isopentenyl diphosphate site. S1 motif domains are found at residues 309–377, 484–552, and 569–638; these read GASV…LSVK, GQVV…LSVK, and GSVV…LSIR.

In the N-terminal section; belongs to the IspH family. The cofactor is [4Fe-4S] cluster.

It catalyses the reaction isopentenyl diphosphate + 2 oxidized [2Fe-2S]-[ferredoxin] + H2O = (2E)-4-hydroxy-3-methylbut-2-enyl diphosphate + 2 reduced [2Fe-2S]-[ferredoxin] + 2 H(+). It carries out the reaction dimethylallyl diphosphate + 2 oxidized [2Fe-2S]-[ferredoxin] + H2O = (2E)-4-hydroxy-3-methylbut-2-enyl diphosphate + 2 reduced [2Fe-2S]-[ferredoxin] + 2 H(+). It functions in the pathway isoprenoid biosynthesis; dimethylallyl diphosphate biosynthesis; dimethylallyl diphosphate from (2E)-4-hydroxy-3-methylbutenyl diphosphate: step 1/1. Its pathway is isoprenoid biosynthesis; isopentenyl diphosphate biosynthesis via DXP pathway; isopentenyl diphosphate from 1-deoxy-D-xylulose 5-phosphate: step 6/6. Its function is as follows. Catalyzes the conversion of 1-hydroxy-2-methyl-2-(E)-butenyl 4-diphosphate (HMBPP) into a mixture of isopentenyl diphosphate (IPP) and dimethylallyl diphosphate (DMAPP). Acts in the terminal step of the DOXP/MEP pathway for isoprenoid precursor biosynthesis. The sequence is that of 4-hydroxy-3-methylbut-2-enyl diphosphate reductase from Clostridium acetobutylicum (strain ATCC 824 / DSM 792 / JCM 1419 / IAM 19013 / LMG 5710 / NBRC 13948 / NRRL B-527 / VKM B-1787 / 2291 / W).